The following is a 279-amino-acid chain: Urease accessory protein UreD (279 aa).

The protein belongs to the UreD family. In terms of assembly, ureD, UreF and UreG form a complex that acts as a GTP-hydrolysis-dependent molecular chaperone, activating the urease apoprotein by helping to assemble the nickel containing metallocenter of UreC. The UreE protein probably delivers the nickel.

The protein resides in the cytoplasm. Functionally, required for maturation of urease via the functional incorporation of the urease nickel metallocenter. The sequence is that of Urease accessory protein UreD from Nitrosospira multiformis (strain ATCC 25196 / NCIMB 11849 / C 71).